Reading from the N-terminus, the 924-residue chain is MPPFTYSDDTLRSGRDRFRDHSPSQHRRSMSQETDSSASTTSIVFDRIQERLDTKEFTPRGTDGDDDGSLKDELNNDDLETGPFLGNADSSSRSDQRSPGDGQRMDRSLRRWLFIVSGVLVATWVIGLFVFVSSKAYKPSSSFAHDPQATVTHGTGKKVTLDQVLNNQWRAKSHSISWIAGANGEDGLLLEKEGVGKDYLVVEDVRAQNPSSVQASKSKALIKEKLFEFANKTYWPSITVPSRDLKKVLLATDVKNNWRHSYYAVYWIFDVETQQVEPLVPYDVEARLQLASWSPTSDAIVYTRDNNMFLRKLGSDKIVQITRDGSADVFNGVPDWVYEEEVLASGVATWWSEDGQYVAFLRTNETGVPEYPIQYFVSRPSGEEPKPGEENYPEVRQIKYPKAGAHNPIVDLKFYDVKRGDVFSVDISGRFADDDRLITEVVWAGKQVLIKETNRVSDVMRVVLVDVGSRTGKAVRTVDVNAIDGGWFEISHKTKFIPADPVNGRPDDGYVDTIIHDNGDHLAYFTPLDNPEPIMLTSGDYEVVDAPSAVDLQRNLVYFVSTKESSIQRHVYQVKLTGEDMTPVTDTSKEGYYAISFSTGAGYAMVSYQGPDIPWQKVISTPSNPDKYEYVVEENKDLAEAAKKHELPINIYGTINVDGVDLNYVERRPPHFDKNKKYPVLFQQYSGPVSQTVKKTFAVDFQSFVAAGLGYICVTVDGRGTGFIGRKNRVIIRGDLGHWESHDQIAAAKHWAQKDYIDEDRLAIWGWSYGGYMTLKTLEQDAGQTFKYGMAVAPVTDWRFYDSIYTERYMRTPQTNLEGYDSAAVTNATALSQNVRFLLMHGVADDNVHMQNSLTLLDALDQRSVENYDVHVFPDSDHGIYFHNANRIVFDKLTNWLVNAFNGEWLKIANAQPNGMKKRAAPTA.

The segment at Met1–Arg104 is disordered. Residues Met1–Arg111 lie on the Cytoplasmic side of the membrane. Over residues Asp9–Pro23 the composition is skewed to basic and acidic residues. Over residues Ser31–Ile43 the composition is skewed to polar residues. Basic and acidic residues-rich tracts occupy residues Arg47–Thr58 and Ser92–Arg104. The helical; Signal-anchor for type II membrane protein transmembrane segment at Trp112 to Val132 threads the bilayer. Topologically, residues Ser133 to Ala924 are vacuolar. N-linked (GlcNAc...) asparagine glycosylation is found at Asn231 and Asn364. The Charge relay system role is filled by Ser768. N-linked (GlcNAc...) asparagine glycosylation occurs at Asn827. Active-site charge relay system residues include Asp845 and His878.

Belongs to the peptidase S9B family.

It localises to the vacuole membrane. The enzyme catalyses Release of an N-terminal dipeptide, Xaa-Yaa-|-Zaa-, from a polypeptide, preferentially when Yaa is Pro, provided Zaa is neither Pro nor hydroxyproline.. Its function is as follows. Type IV dipeptidyl-peptidase which removes N-terminal dipeptides sequentially from polypeptides having unsubstituted N-termini provided that the penultimate residue is proline. This chain is Probable dipeptidyl-aminopeptidase B (DAPB), found in Sordaria macrospora (strain ATCC MYA-333 / DSM 997 / K(L3346) / K-hell).